The sequence spans 126 residues: Glycine cleavage system H protein (126 aa).

Positions 22 to 104 (IATVGITAFA…YGRGWLFKVE (83 aa)) constitute a Lipoyl-binding domain. At K63 the chain carries N6-lipoyllysine.

Belongs to the GcvH family. In terms of assembly, the glycine cleavage system is composed of four proteins: P, T, L and H. (R)-lipoate serves as cofactor.

In terms of biological role, the glycine cleavage system catalyzes the degradation of glycine. The H protein shuttles the methylamine group of glycine from the P protein to the T protein. This is Glycine cleavage system H protein from Thermobifida fusca (strain YX).